Consider the following 212-residue polypeptide: MGRGKIEIKRIENSSNRQVTYSKRRNGIMKKAKEITVLCDAHVSLVIFASSGKMHEYCSPSTTLIDILDRYHKQSGKRLWDAKHENLNNELDRIKKENDSMQIELRHLKGEDISSLHHKELMAIEDALEIGLASVRNKQMEFYKMVKKNQRILEEENKHLNYIVHHQGMPMEAGNVREVESGYHQRAVRDYNPQMPFAFRVQPIQPNLQERI.

Positions 1–61 constitute an MADS-box domain; the sequence is MGRGKIEIKR…GKMHEYCSPS (61 aa). The K-box domain occupies 84-170; that stretch reads HENLNNELDR…NYIVHHQGMP (87 aa).

Expressed during flower development in stamens and petals.

The protein localises to the nucleus. Its function is as follows. Probable transcription factor that may play role in specifying stamen and petal organ identity. The polypeptide is Agamous-like MADS-box protein MADS9 (Vitis vinifera (Grape)).